Reading from the N-terminus, the 229-residue chain is 2,3-bisphosphoglycerate-dependent phosphoglycerate mutase (229 aa).

Residues 7 to 14 (RHGQSEWN), 20 to 21 (TG), R59, 86 to 89 (ERHY), K97, 113 to 114 (RR), and 182 to 183 (GN) each bind substrate. The active-site Tele-phosphohistidine intermediate is H8. Residue E86 is the Proton donor/acceptor of the active site.

This sequence belongs to the phosphoglycerate mutase family. BPG-dependent PGAM subfamily.

The enzyme catalyses (2R)-2-phosphoglycerate = (2R)-3-phosphoglycerate. Its pathway is carbohydrate degradation; glycolysis; pyruvate from D-glyceraldehyde 3-phosphate: step 3/5. Catalyzes the interconversion of 2-phosphoglycerate and 3-phosphoglycerate. In Listeria welshimeri serovar 6b (strain ATCC 35897 / DSM 20650 / CCUG 15529 / CIP 8149 / NCTC 11857 / SLCC 5334 / V8), this protein is 2,3-bisphosphoglycerate-dependent phosphoglycerate mutase.